The following is a 211-amino-acid chain: ATP phosphoribosyltransferase (211 aa).

It belongs to the ATP phosphoribosyltransferase family. Short subfamily. As to quaternary structure, heteromultimer composed of HisG and HisZ subunits.

Its subcellular location is the cytoplasm. The enzyme catalyses 1-(5-phospho-beta-D-ribosyl)-ATP + diphosphate = 5-phospho-alpha-D-ribose 1-diphosphate + ATP. It participates in amino-acid biosynthesis; L-histidine biosynthesis; L-histidine from 5-phospho-alpha-D-ribose 1-diphosphate: step 1/9. Its function is as follows. Catalyzes the condensation of ATP and 5-phosphoribose 1-diphosphate to form N'-(5'-phosphoribosyl)-ATP (PR-ATP). Has a crucial role in the pathway because the rate of histidine biosynthesis seems to be controlled primarily by regulation of HisG enzymatic activity. The polypeptide is ATP phosphoribosyltransferase (Pseudomonas fluorescens (strain SBW25)).